Here is a 194-residue protein sequence, read N- to C-terminus: ATP-dependent Clp protease proteolytic subunit (194 aa).

The active-site Nucleophile is the Ser-98. Residue His-123 is part of the active site.

Belongs to the peptidase S14 family. Fourteen ClpP subunits assemble into 2 heptameric rings which stack back to back to give a disk-like structure with a central cavity, resembling the structure of eukaryotic proteasomes.

The protein resides in the cytoplasm. It carries out the reaction Hydrolysis of proteins to small peptides in the presence of ATP and magnesium. alpha-casein is the usual test substrate. In the absence of ATP, only oligopeptides shorter than five residues are hydrolyzed (such as succinyl-Leu-Tyr-|-NHMec, and Leu-Tyr-Leu-|-Tyr-Trp, in which cleavage of the -Tyr-|-Leu- and -Tyr-|-Trp bonds also occurs).. In terms of biological role, cleaves peptides in various proteins in a process that requires ATP hydrolysis. Has a chymotrypsin-like activity. Plays a major role in the degradation of misfolded proteins. This Sodalis glossinidius (strain morsitans) protein is ATP-dependent Clp protease proteolytic subunit.